A 400-amino-acid chain; its full sequence is Large envelope protein (400 aa).

The N-myristoyl glycine; by host moiety is linked to residue glycine 2. Residues 2 to 119 are pre-S1; that stretch reads GGWLPKPRKG…PPLRDSHPQA (118 aa). The interval 2 to 174 is pre-S; sequence GGWLPKPRKG…SSRTGDPAPT (173 aa). Residues 2–181 lie on the Virion surface; in external conformation side of the membrane; that stretch reads GGWLPKPRKG…APTMENITSG (180 aa). Residues 2–253 lie on the Intravirion; in internal conformation side of the membrane; the sequence is GGWLPKPRKG…PGYRWMCLRR (252 aa). Residues 84–115 are disordered; sequence TLTTVPAVPPPASANRQSGRQPTPISPPLRDS. Residues 97 to 106 show a composition bias toward polar residues; the sequence is ANRQSGRQPT. The tract at residues 120-174 is pre-S2; that stretch reads IKWNSPAFHQALQDPRVKGLYFPAGGSSSGTVSPVPNIASHISSISSRTGDPAPT. A helical transmembrane segment spans residues 182 to 202; sequence FLGPLLVLQAGFFLLTRILTI. Over 203–253 the chain is Intravirion; in external conformation; that stretch reads PQSLDSWWTSLNFLGGSPVCLGQNSQSPTSNHSPTSCPPICPGYRWMCLRR. Residues 254–274 form a helical membrane-spanning segment; it reads FIIFLFILLLCLIFLLVLLDY. Residues 275-348 lie on the Virion surface side of the membrane; the sequence is QGMLPVCPLI…WASVRFSWLS (74 aa). Asparagine 320 is a glycosylation site (N-linked (GlcNAc...) asparagine; by host). The chain crosses the membrane as a helical span at residues 349-369; the sequence is LLVPFVQWFVGLSPTVWLSVI. Residues 370 to 375 lie on the Intravirion side of the membrane; the sequence is WMMWYW. The helical transmembrane segment at 376–398 threads the bilayer; sequence GPRLYNILSPFIPLLPIFFCLWV. Residues 399-400 are Virion surface-facing; it reads YI.

It belongs to the orthohepadnavirus major surface antigen family. Li-HBsAg interacts with capsid protein and with HDV Large delta antigen. Isoform M associates with host chaperone CANX through its pre-S2 N glycan. This association may be essential for M proper secretion. Isoform M is N-terminally acetylated by host at a ratio of 90%, and N-glycosylated by host at the pre-S2 region. Post-translationally, myristoylated.

It localises to the virion membrane. Its function is as follows. The large envelope protein exists in two topological conformations, one which is termed 'external' or Le-HBsAg and the other 'internal' or Li-HBsAg. In its external conformation the protein attaches the virus to cell receptors and thereby initiating infection. This interaction determines the species specificity and liver tropism. This attachment induces virion internalization predominantly through caveolin-mediated endocytosis. The large envelope protein also assures fusion between virion membrane and endosomal membrane. In its internal conformation the protein plays a role in virion morphogenesis and mediates the contact with the nucleocapsid like a matrix protein. Functionally, the middle envelope protein plays an important role in the budding of the virion. It is involved in the induction of budding in a nucleocapsid independent way. In this process the majority of envelope proteins bud to form subviral lipoprotein particles of 22 nm of diameter that do not contain a nucleocapsid. This chain is Large envelope protein, found in Hepatitis B virus genotype A3 (isolate Cameroon/CMR983/1994) (HBV-A).